A 524-amino-acid chain; its full sequence is Apoptosis inhibitor 5-A (524 aa).

Residues 1-360 (MATVEELYRS…HQLGRKLPDF (360 aa)) form an ARM-like and Heat-like helical repeats region. Residues 440–524 (TLSWKPVQRT…RGNRSRGRIY (85 aa)) form a disordered region. A Nuclear localization signal motif is present at residues 455–476 (KRTSDETSSTSPPKKPIVGPKR). A compositionally biased stretch (gly residues) spans 503-516 (GFQGGRGRGWGGRG).

This sequence belongs to the API5 family. In terms of assembly, monomer.

The protein resides in the nucleus. In terms of biological role, may be an antiapoptotic factor. This chain is Apoptosis inhibitor 5-A (api5-a), found in Xenopus laevis (African clawed frog).